Consider the following 145-residue polypeptide: Ribonuclease H (145 aa).

The region spanning 1 to 141 (MQEVTIYSDG…ADALANRGVE (141 aa)) is the RNase H type-1 domain. Residues D9, E47, D69, and D133 each contribute to the Mg(2+) site.

It belongs to the RNase H family. As to quaternary structure, monomer. Mg(2+) is required as a cofactor.

It localises to the cytoplasm. It catalyses the reaction Endonucleolytic cleavage to 5'-phosphomonoester.. Its function is as follows. Endonuclease that specifically degrades the RNA of RNA-DNA hybrids. In Cupriavidus necator (strain ATCC 17699 / DSM 428 / KCTC 22496 / NCIMB 10442 / H16 / Stanier 337) (Ralstonia eutropha), this protein is Ribonuclease H.